The chain runs to 367 residues: Tetraacyldisaccharide 4'-kinase (367 aa).

ATP is bound at residue 68–75; it reads VLGGSGKT.

The protein belongs to the LpxK family.

The catalysed reaction is a lipid A disaccharide + ATP = a lipid IVA + ADP + H(+). It participates in glycolipid biosynthesis; lipid IV(A) biosynthesis; lipid IV(A) from (3R)-3-hydroxytetradecanoyl-[acyl-carrier-protein] and UDP-N-acetyl-alpha-D-glucosamine: step 6/6. Transfers the gamma-phosphate of ATP to the 4'-position of a tetraacyldisaccharide 1-phosphate intermediate (termed DS-1-P) to form tetraacyldisaccharide 1,4'-bis-phosphate (lipid IVA). This Chlamydia abortus (strain DSM 27085 / S26/3) (Chlamydophila abortus) protein is Tetraacyldisaccharide 4'-kinase.